Here is a 483-residue protein sequence, read N- to C-terminus: MARAIMFQGTGSDVGKSVLVAGLCRVARNRGLKVRPFKPQNMSNNAAVSDDGGEIGRAQWLQALACGVPSSVHMNPVLLKPQTDMGSQLIVQGQVRGEARGRYYQELKPQLMAAVMESFAKVGDGADLVLVEGAGSPAEINLRAGDIANMGFATHADVPVVLVGDIDRGGVIASLVGTHTILPQEDRAMVRGFLINKFRGDISLFDDGLAAITRFTGWRSFGVVPWLKAVSRLPAEDSVVLERAVRGDKKALIVAVPMLPRIANFDDLDPLKAEPAVEVVMVPPGSSLPADAGLVVLPGTKSTIADLLALRENGWDRELVAHVKRGGHVLGICGGFQMLGRRISDPAGIEGNVRDIEGLGLLDIETMMEPEKVVRNVEAVSLLHDEPLEGYEIHIGRTSGPDMARPFARIGDHDDGAVSPDGRIMGTYLHGVFSADRFRHHFLRALGVEGGQMNYRESVEEALDELAEGLEASLDIDGLFALA.

A GATase cobBQ-type domain is found at 251–438 (ALIVAVPMLP…LHGVFSADRF (188 aa)). The Nucleophile role is filled by Cys-333. The active site involves His-430.

This sequence belongs to the CobB/CobQ family. CobQ subfamily.

Its pathway is cofactor biosynthesis; adenosylcobalamin biosynthesis. Its function is as follows. Catalyzes amidations at positions B, D, E, and G on adenosylcobyrinic A,C-diamide. NH(2) groups are provided by glutamine, and one molecule of ATP is hydrogenolyzed for each amidation. This Brucella suis biovar 1 (strain 1330) protein is Cobyric acid synthase.